A 225-amino-acid chain; its full sequence is UPF0758 protein SEQ_1136 (225 aa).

In terms of domain architecture, MPN spans 102-224 (PVLSSAQVAE…YYSFREKSDL (123 aa)). Residues His-173, His-175, and Asp-186 each contribute to the Zn(2+) site. The JAMM motif signature appears at 173-186 (HNHPSGLTKPSAND).

Belongs to the UPF0758 family.

The sequence is that of UPF0758 protein SEQ_1136 from Streptococcus equi subsp. equi (strain 4047).